The sequence spans 454 residues: Transcription factor efuD (454 aa).

The region spanning 4-111 is the HTH TFE/IIEalpha-type domain; it reads AKELIRITAR…NYHRAIDSIK (108 aa). Positions 327–454 are disordered; sequence LRTDDDGAMD…DEDELEFEDI (128 aa). Over residues 353-372 the composition is skewed to acidic residues; the sequence is DQDEEEEEEDDDDDEFEDVD. Residues 387–401 are compositionally biased toward polar residues; sequence SVSTPATSAQVSSTA. Residues 423-437 show a composition bias toward low complexity; the sequence is APAAAASSQAAAAES. The segment covering 442–454 has biased composition (acidic residues); that stretch reads SDEDEDELEFEDI.

The protein belongs to the TFIIE alpha subunit family.

The protein localises to the nucleus. Transcription factor; part of the gene cluster that mediates the biosynthesis of enfumafungin, a glycosylated fernene-type triterpenoid with potent antifungal activity, mediated by its interaction with beta-1,3-glucan synthase and the fungal cell wall. Is possibly responsible for the transcription regulation of one or more genes within the gene cluster. The sequence is that of Transcription factor efuD from Hormonema carpetanum.